Here is a 246-residue protein sequence, read N- to C-terminus: UDP-N-acetyl-D-mannosaminuronic acid transferase (246 aa).

This sequence belongs to the glycosyltransferase 26 family.

It carries out the reaction UDP-N-acetyl-alpha-D-mannosaminouronate + N-acetyl-alpha-D-glucosaminyl-di-trans,octa-cis-undecaprenyl diphosphate = beta-D-ManNAcA-(1-&gt;4)-alpha-D-GlcNAc-di-trans,octa-cis-undecaprenyl diphosphate + UDP + H(+). It functions in the pathway bacterial outer membrane biogenesis; enterobacterial common antigen biosynthesis. Functionally, catalyzes the synthesis of Und-PP-GlcNAc-ManNAcA (Lipid II), the second lipid-linked intermediate involved in enterobacterial common antigen (ECA) synthesis. This chain is UDP-N-acetyl-D-mannosaminuronic acid transferase, found in Shigella flexneri.